Reading from the N-terminus, the 319-residue chain is ATP-dependent 6-phosphofructokinase (319 aa).

Gly11 contributes to the ATP binding site. Position 21–25 (21–25 (RAVVR)) interacts with ADP. Residues 72-73 (RY) and 102-105 (GDGS) each bind ATP. A Mg(2+)-binding site is contributed by Asp103. 125–127 (TID) serves as a coordination point for substrate. Residue Asp127 is the Proton acceptor of the active site. Arg154 is an ADP binding site. Residues Arg162 and 169-171 (MGR) contribute to the substrate site. ADP contacts are provided by residues 185-187 (GAE), Arg211, and 213-215 (KKH). Substrate-binding positions include Glu222, Arg243, and 249 to 252 (HVQR).

It belongs to the phosphofructokinase type A (PFKA) family. ATP-dependent PFK group I subfamily. Prokaryotic clade 'B1' sub-subfamily. In terms of assembly, homotetramer. It depends on Mg(2+) as a cofactor.

It is found in the cytoplasm. The enzyme catalyses beta-D-fructose 6-phosphate + ATP = beta-D-fructose 1,6-bisphosphate + ADP + H(+). It participates in carbohydrate degradation; glycolysis; D-glyceraldehyde 3-phosphate and glycerone phosphate from D-glucose: step 3/4. With respect to regulation, allosterically activated by ADP and other diphosphonucleosides, and allosterically inhibited by phosphoenolpyruvate. In terms of biological role, catalyzes the phosphorylation of D-fructose 6-phosphate to fructose 1,6-bisphosphate by ATP, the first committing step of glycolysis. The chain is ATP-dependent 6-phosphofructokinase from Listeria welshimeri serovar 6b (strain ATCC 35897 / DSM 20650 / CCUG 15529 / CIP 8149 / NCTC 11857 / SLCC 5334 / V8).